The sequence spans 150 residues: SsrA-binding protein (150 aa).

Belongs to the SmpB family.

It localises to the cytoplasm. Its function is as follows. Required for rescue of stalled ribosomes mediated by trans-translation. Binds to transfer-messenger RNA (tmRNA), required for stable association of tmRNA with ribosomes. tmRNA and SmpB together mimic tRNA shape, replacing the anticodon stem-loop with SmpB. tmRNA is encoded by the ssrA gene; the 2 termini fold to resemble tRNA(Ala) and it encodes a 'tag peptide', a short internal open reading frame. During trans-translation Ala-aminoacylated tmRNA acts like a tRNA, entering the A-site of stalled ribosomes, displacing the stalled mRNA. The ribosome then switches to translate the ORF on the tmRNA; the nascent peptide is terminated with the 'tag peptide' encoded by the tmRNA and targeted for degradation. The ribosome is freed to recommence translation, which seems to be the essential function of trans-translation. The sequence is that of SsrA-binding protein from Bacteroides thetaiotaomicron (strain ATCC 29148 / DSM 2079 / JCM 5827 / CCUG 10774 / NCTC 10582 / VPI-5482 / E50).